The chain runs to 82 residues: Defensin-like protein 7 (82 aa).

Residues M1–G29 form the signal peptide. Position 30 is a pyrrolidone carboxylic acid (Q30). 4 disulfides stabilise this stretch: C33–C77, C44–C64, C50–C71, and C54–C73.

Belongs to the DEFL family. In terms of tissue distribution, expressed in stems, roots, rosette leaves and flower buds.

It is found in the secreted. The sequence is that of Defensin-like protein 7 (LCR75) from Arabidopsis thaliana (Mouse-ear cress).